The following is a 208-amino-acid chain: Histone H1t (208 aa).

Residues 1-12 are compositionally biased toward polar residues; sequence MSETAPAASSTL. The tract at residues 1 to 39 is disordered; that stretch reads MSETAPAASSTLVPAPVEKPATKRRGKKPGMATARKPRG. Ser-9 carries the phosphoserine modification. Positions 38–111 constitute an H15 domain; sequence RGFSVSKLIP…GASGSFKLSK (74 aa). Arg-56 is modified (citrulline). The disordered stretch occupies residues 93-208; that stretch reads GVLVQTKGTG…TDLRKAAGRK (116 aa). Residues 121-134 are compositionally biased toward basic residues; it reads KGKKSASAKAKKLG. The residue at position 141 (Ser-141) is a Phosphoserine. Positions 143–154 are enriched in basic residues; sequence KSSKTKVVKKPK. Phosphothreonine is present on Thr-156. Residues Ser-163, Ser-178, and Ser-187 each carry the phosphoserine modification. The span at 199-208 shows a compositional bias: basic and acidic residues; the sequence is TDLRKAAGRK.

The protein belongs to the histone H1/H5 family. Phosphorylated in early spermatids. Post-translationally, citrullination at Arg-56 (H1R54ci) by PADI4 takes place within the DNA-binding site of H1 and results in its displacement from chromatin and global chromatin decondensation, thereby promoting pluripotency and stem cell maintenance. In terms of tissue distribution, testis-specific. Expressed in pachytene spermatocytes during meiotic prophase I.

The protein localises to the nucleus. It localises to the chromosome. Testis-specific histone H1 that forms less compacted chromatin compared to other H1 histone subtypes. Formation of more relaxed chromatin may be required to promote chromatin architecture required for proper chromosome regulation during meiosis, such as homologous recombination. Histones H1 act as linkers that bind to nucleosomes and compact polynucleosomes into a higher-order chromatin configuration. In Rattus norvegicus (Rat), this protein is Histone H1t.